A 440-amino-acid polypeptide reads, in one-letter code: Trigger factor (440 aa).

Residues 161–257 form the PPIase FKBP-type domain; sequence GDYVKLAYEG…VLEVRERVLP (97 aa).

The protein belongs to the FKBP-type PPIase family. Tig subfamily.

The protein localises to the cytoplasm. It carries out the reaction [protein]-peptidylproline (omega=180) = [protein]-peptidylproline (omega=0). Its function is as follows. Involved in protein export. Acts as a chaperone by maintaining the newly synthesized protein in an open conformation. Functions as a peptidyl-prolyl cis-trans isomerase. The polypeptide is Trigger factor (Opitutus terrae (strain DSM 11246 / JCM 15787 / PB90-1)).